The following is a 336-amino-acid chain: NEDD4 family-interacting protein 2 (336 aa).

2 disordered regions span residues 1–24 (MARR…RGAP) and 37–156 (SAAA…SITV). Topologically, residues 1–231 (MARRRSQRVC…ADQLRVGNDG (231 aa)) are cytoplasmic. Residues 37 to 48 (SAAAAGATGSEE) show a composition bias toward low complexity. Over residues 78 to 99 (EHGEDSLSRKPDPEPGRMDHHQ) the composition is skewed to basic and acidic residues. An interaction with NEDD4 region spans residues 148-151 (PPPY). The PPxY motif 1 motif lies at 148 to 151 (PPPY). Phosphotyrosine; by SRC occurs at positions 151, 167, 171, and 177. Short sequence motifs (PPxY motif) lie at residues 174–177 (PPPY) and 184–186 (PTY). Residues 232–252 (IFMLAFFMAFIFNWLGFCLSF) traverse the membrane as a helical segment. The Extracellular portion of the chain corresponds to 253-257 (CITNT). Residues 258 to 278 (IAGRYGAICGFGLSLIKWILI) form a helical membrane-spanning segment. Residues 279 to 287 (VRFSDYFTG) are Cytoplasmic-facing. A helical transmembrane segment spans residues 288-308 (YFNGQYWLWWIFLVLGLLLFF). The Extracellular segment spans residues 309 to 336 (RGFVNYLKVRNMSESMAAAHRTRYFFLL).

In terms of assembly, forms heterodimers with NDFIP1. Interacts with HECT domain-containing E3 ubiquitin-protein ligases, including NEDD4. Interacts with NEDD4L. Interacts with PTEN. When phosphorylated at Tyr-167, interacts with SRC and LYN SH2 domain. May thus act as a scaffold that recruits SRC to NDFIP1, enhancing NDFIP1 phosphorylation. Interacts with SLC11A2/DMT1. May interact with phosphorylated EGFR. Interacts with KCNH2. Post-translationally, ubiquitinated by NEDD4 and ITCH. Also ubiquitinated by NEDD4L. Ubiquitination by NEDD4 or NEDD4L does not affect turnover. Undergoes transient tyrosine-phosphorylation following EGF stimulation, most probably catalyzed by SRC. Phosphorylation on Tyr-151, Tyr-171 and Tyr-177 are dependent on the phosphorylation on Tyr-167. Also phosphorylated by LYN and FYN. Expressed in brain, lung, heart, skeletal muscle, kidney, liver and placenta.

Its subcellular location is the endosome membrane. The protein resides in the golgi apparatus membrane. The protein localises to the endosome. It localises to the multivesicular body membrane. Functionally, activates HECT domain-containing E3 ubiquitin-protein ligases, including ITCH, NEDD4, NEDD4L, SMURF2, WWP1 and WWP2, and consequently modulates the stability of their targets. As a result, may control many cellular processes. Recruits ITCH, NEDD4 and SMURF2 to endosomal membranes. Negatively regulates KCNH2 potassium channel activity by decreasing its cell-surface expression and interfering with channel maturation through recruitment of NEDD4L to the Golgi apparatus and multivesicular body where it mediates KCNH2 degradation. May modulate EGFR signaling. Together with NDFIP1, limits the cytokine signaling and expansion of effector Th2 T-cells by promoting degradation of JAK1, probably by ITCH- and NEDD4L-mediated ubiquitination. The polypeptide is NEDD4 family-interacting protein 2 (NDFIP2) (Homo sapiens (Human)).